The sequence spans 576 residues: Arginine--tRNA ligase (576 aa).

The 'HIGH' region signature appears at 122 to 132 (PNVAKEMHVGH).

It belongs to the class-I aminoacyl-tRNA synthetase family. In terms of assembly, monomer.

It localises to the cytoplasm. It carries out the reaction tRNA(Arg) + L-arginine + ATP = L-arginyl-tRNA(Arg) + AMP + diphosphate. The polypeptide is Arginine--tRNA ligase (Sodalis glossinidius (strain morsitans)).